Consider the following 449-residue polypeptide: 4-aminobutyrate aminotransferase (449 aa).

The residue at position 294 (K294) is an N6-(pyridoxal phosphate)lysine.

This sequence belongs to the class-III pyridoxal-phosphate-dependent aminotransferase family. Pyridoxal 5'-phosphate serves as cofactor.

It catalyses the reaction 4-aminobutanoate + 2-oxoglutarate = succinate semialdehyde + L-glutamate. The catalysed reaction is (S)-3-amino-2-methylpropanoate + 2-oxoglutarate = 2-methyl-3-oxopropanoate + L-glutamate. The protein operates within amino-acid degradation; 4-aminobutanoate degradation. The sequence is that of 4-aminobutyrate aminotransferase (gabT) from Mycobacterium bovis (strain ATCC BAA-935 / AF2122/97).